Here is a 464-residue protein sequence, read N- to C-terminus: Argininosuccinate lyase (464 aa).

The protein belongs to the lyase 1 family. Argininosuccinate lyase subfamily.

It is found in the cytoplasm. It catalyses the reaction 2-(N(omega)-L-arginino)succinate = fumarate + L-arginine. It participates in amino-acid biosynthesis; L-arginine biosynthesis; L-arginine from L-ornithine and carbamoyl phosphate: step 3/3. This is Argininosuccinate lyase from Alcanivorax borkumensis (strain ATCC 700651 / DSM 11573 / NCIMB 13689 / SK2).